The primary structure comprises 249 residues: 15,16-dihydrobiliverdin:ferredoxin oxidoreductase (249 aa).

This sequence belongs to the HY2 family.

The catalysed reaction is 15,16-dihydrobiliverdin + oxidized 2[4Fe-4S]-[ferredoxin] = biliverdin IXalpha + reduced 2[4Fe-4S]-[ferredoxin] + 2 H(+). Functionally, catalyzes the two-electron reduction of biliverdin IX-alpha at the C15 methine bridge. The protein is 15,16-dihydrobiliverdin:ferredoxin oxidoreductase of Prochlorococcus marinus (strain MIT 9303).